The primary structure comprises 70 residues: Conotoxin AbVIC (70 aa).

The N-terminal stretch at 1-17 is a signal peptide; that stretch reads VLIIAVLFLTACQLTTA. Positions 18 to 41 are excised as a propeptide; sequence ETSSRGKQKHRALRSTDKNSKLTR. Positions 19 to 41 are disordered; sequence TSSRGKQKHRALRSTDKNSKLTR. 3 disulfide bridges follow: cysteine 43–cysteine 57, cysteine 50–cysteine 61, and cysteine 56–cysteine 68.

It belongs to the conotoxin O1 superfamily. In terms of tissue distribution, expressed by the venom duct.

It localises to the secreted. The protein is Conotoxin AbVIC of Conus abbreviatus (Abbreviated cone).